The primary structure comprises 195 residues: Holliday junction branch migration complex subunit RuvA (195 aa).

The interval M1–V63 is domain I. Positions D64–V142 are domain II. Residues G143 to P150 form a flexible linker region. A domain III region spans residues P150 to K195.

The protein belongs to the RuvA family. Homotetramer. Forms an RuvA(8)-RuvB(12)-Holliday junction (HJ) complex. HJ DNA is sandwiched between 2 RuvA tetramers; dsDNA enters through RuvA and exits via RuvB. An RuvB hexamer assembles on each DNA strand where it exits the tetramer. Each RuvB hexamer is contacted by two RuvA subunits (via domain III) on 2 adjacent RuvB subunits; this complex drives branch migration. In the full resolvosome a probable DNA-RuvA(4)-RuvB(12)-RuvC(2) complex forms which resolves the HJ.

The protein localises to the cytoplasm. The RuvA-RuvB-RuvC complex processes Holliday junction (HJ) DNA during genetic recombination and DNA repair, while the RuvA-RuvB complex plays an important role in the rescue of blocked DNA replication forks via replication fork reversal (RFR). RuvA specifically binds to HJ cruciform DNA, conferring on it an open structure. The RuvB hexamer acts as an ATP-dependent pump, pulling dsDNA into and through the RuvAB complex. HJ branch migration allows RuvC to scan DNA until it finds its consensus sequence, where it cleaves and resolves the cruciform DNA. The sequence is that of Holliday junction branch migration complex subunit RuvA from Mycolicibacterium smegmatis (strain ATCC 700084 / mc(2)155) (Mycobacterium smegmatis).